The sequence spans 240 residues: Transmembrane emp24 domain-containing protein 6 (240 aa).

Positions M1–S21 are cleaved as a signal peptide. The Lumenal segment spans residues Q22–Y200. In terms of domain architecture, GOLD spans T53 to V138. N-linked (GlcNAc...) asparagine glycosylation is found at N107 and N156. A helical transmembrane segment spans residues V201–L223. Topologically, residues K224 to C240 are cytoplasmic.

This sequence belongs to the EMP24/GP25L family.

It is found in the endoplasmic reticulum membrane. The sequence is that of Transmembrane emp24 domain-containing protein 6 (TMED6) from Homo sapiens (Human).